Reading from the N-terminus, the 394-residue chain is Phosphoglycerate kinase (394 aa).

Substrate contacts are provided by residues 21 to 23, Arg-36, 59 to 62, Arg-118, and Arg-151; these read DFN and HLGR. Residue Ser-183 is modified to Phosphoserine. ATP is bound by residues Lys-201 and Gly-292. Thr-299 carries the post-translational modification Phosphothreonine. ATP is bound by residues Glu-323 and 350–353; that span reads GGDS.

The protein belongs to the phosphoglycerate kinase family. As to quaternary structure, monomer.

It localises to the cytoplasm. The catalysed reaction is (2R)-3-phosphoglycerate + ATP = (2R)-3-phospho-glyceroyl phosphate + ADP. It functions in the pathway carbohydrate degradation; glycolysis; pyruvate from D-glyceraldehyde 3-phosphate: step 2/5. This Bacillus cereus (strain G9842) protein is Phosphoglycerate kinase.